The chain runs to 127 residues: Small ribosomal subunit protein uS11 (127 aa).

The protein belongs to the universal ribosomal protein uS11 family. As to quaternary structure, part of the 30S ribosomal subunit. Interacts with proteins S7 and S18. Binds to IF-3.

In terms of biological role, located on the platform of the 30S subunit, it bridges several disparate RNA helices of the 16S rRNA. Forms part of the Shine-Dalgarno cleft in the 70S ribosome. This Pelodictyon phaeoclathratiforme (strain DSM 5477 / BU-1) protein is Small ribosomal subunit protein uS11.